The primary structure comprises 445 residues: Trigger factor (445 aa).

One can recognise a PPIase FKBP-type domain in the interval 162 to 247 (GDQVTIDAIG…IKAVHTAEPT (86 aa)).

The protein belongs to the FKBP-type PPIase family. Tig subfamily.

The protein resides in the cytoplasm. It carries out the reaction [protein]-peptidylproline (omega=180) = [protein]-peptidylproline (omega=0). Its function is as follows. Involved in protein export. Acts as a chaperone by maintaining the newly synthesized protein in an open conformation. Functions as a peptidyl-prolyl cis-trans isomerase. In Rickettsia peacockii (strain Rustic), this protein is Trigger factor.